The following is a 189-amino-acid chain: Potassium-transporting ATPase KdpC subunit (189 aa).

A helical transmembrane segment spans residues leucine 11 to alanine 31.

It belongs to the KdpC family. In terms of assembly, the system is composed of three essential subunits: KdpA, KdpB and KdpC.

The protein resides in the cell inner membrane. In terms of biological role, part of the high-affinity ATP-driven potassium transport (or Kdp) system, which catalyzes the hydrolysis of ATP coupled with the electrogenic transport of potassium into the cytoplasm. This subunit acts as a catalytic chaperone that increases the ATP-binding affinity of the ATP-hydrolyzing subunit KdpB by the formation of a transient KdpB/KdpC/ATP ternary complex. The polypeptide is Potassium-transporting ATPase KdpC subunit (Polynucleobacter asymbioticus (strain DSM 18221 / CIP 109841 / QLW-P1DMWA-1) (Polynucleobacter necessarius subsp. asymbioticus)).